Reading from the N-terminus, the 148-residue chain is Large ribosomal subunit protein bL19 (148 aa).

Belongs to the bacterial ribosomal protein bL19 family.

Its function is as follows. This protein is located at the 30S-50S ribosomal subunit interface and may play a role in the structure and function of the aminoacyl-tRNA binding site. The polypeptide is Large ribosomal subunit protein bL19 (Paramagnetospirillum magneticum (strain ATCC 700264 / AMB-1) (Magnetospirillum magneticum)).